The chain runs to 492 residues: N-succinylglutamate 5-semialdehyde dehydrogenase (492 aa).

220 to 225 (GSAGTG) is an NAD(+) binding site. Active-site residues include Glu243 and Cys277.

Belongs to the aldehyde dehydrogenase family. AstD subfamily.

It catalyses the reaction N-succinyl-L-glutamate 5-semialdehyde + NAD(+) + H2O = N-succinyl-L-glutamate + NADH + 2 H(+). It participates in amino-acid degradation; L-arginine degradation via AST pathway; L-glutamate and succinate from L-arginine: step 4/5. Catalyzes the NAD-dependent reduction of succinylglutamate semialdehyde into succinylglutamate. In Cronobacter sakazakii (strain ATCC BAA-894) (Enterobacter sakazakii), this protein is N-succinylglutamate 5-semialdehyde dehydrogenase.